Consider the following 555-residue polypeptide: Formate--tetrahydrofolate ligase (555 aa).

Residue 65–72 (TPAGEGKT) participates in ATP binding.

The protein belongs to the formate--tetrahydrofolate ligase family.

The enzyme catalyses (6S)-5,6,7,8-tetrahydrofolate + formate + ATP = (6R)-10-formyltetrahydrofolate + ADP + phosphate. The protein operates within one-carbon metabolism; tetrahydrofolate interconversion. This is Formate--tetrahydrofolate ligase from Thermoanaerobacter sp. (strain X514).